The following is a 349-amino-acid chain: Transmembrane protein 255A (349 aa).

The next 4 helical transmembrane spans lie at 30–50 (IYVTVTLLIVSVLILTVGLAA), 57–77 (VTVGGYYPGVILGFGSFLGII), 89–109 (LVASIVFISFGVIAAFCCAIV), and 226–246 (TILNIVGLFLGIITAAVLGGF). Residues 303–329 (PSSPPSGLSDEPQSASPSPSYMWSSSA) are disordered. The span at 316–329 (SASPSPSYMWSSSA) shows a compositional bias: low complexity.

It belongs to the TMEM255 family.

Its subcellular location is the membrane. This is Transmembrane protein 255A (TMEM255A) from Homo sapiens (Human).